A 158-amino-acid polypeptide reads, in one-letter code: Protein Smg homolog (158 aa).

This sequence belongs to the Smg family.

This Shewanella sp. (strain ANA-3) protein is Protein Smg homolog.